Here is a 369-residue protein sequence, read N- to C-terminus: Phosphoribosyl pyrophosphate synthase-associated protein 2 (369 aa).

At methionine 1 the chain carries N-acetylmethionine. Phosphoserine is present on residues serine 219, serine 227, and serine 233.

This sequence belongs to the ribose-phosphate pyrophosphokinase family. As to quaternary structure, binds to PRPS1 and PRPS2.

In terms of biological role, seems to play a negative regulatory role in 5-phosphoribose 1-diphosphate synthesis. This is Phosphoribosyl pyrophosphate synthase-associated protein 2 (PRPSAP2) from Bos taurus (Bovine).